A 445-amino-acid chain; its full sequence is Secretin receptor (445 aa).

The signal sequence occupies residues 1–21 (MCPRPGPPLGLWLLLGFACAA). At 22–137 (HLVGAPPRLC…HERQHAYLLK (116 aa)) the chain is on the extracellular side. Intrachain disulfides connect C44–C71, C62–C103, and C85–C119. Residues N68, N96, N102, and N124 are each glycosylated (N-linked (GlcNAc...) asparagine). Residues 138–163 (LKVMYTVGYSSSLVMLLVALGILCAF) traverse the membrane as a helical segment. Over 164-170 (RRLHCTR) the chain is Cytoplasmic. Residues 171–191 (NYIHMHLFLSFILRALSNFIK) form a helical membrane-spanning segment. Residues 192 to 212 (DAVLFSSDDAIHCDAHRVGCK) lie on the Extracellular side of the membrane. C211 and C281 form a disulfide bridge. The helical transmembrane segment at 213 to 235 (LVMVFFQYCIMANYAWLLVEGLY) threads the bilayer. Residues 236–250 (LHSLLVVSFFSERKC) are Cytoplasmic-facing. The helical transmembrane segment at 251-272 (LQGFVVLGWGSPAMFVTSWAVT) threads the bilayer. The Extracellular portion of the chain corresponds to 273 to 287 (RHFLEDSGCWDINAN). A helical transmembrane segment spans residues 288 to 311 (AAIWWVIRGPVILSILINFILFIN). Topologically, residues 312–336 (ILRILTRKLRTQETRGQDMNHYKRL) are cytoplasmic. Residues 337 to 352 (ARSTLLLIPLFGVHYI) traverse the membrane as a helical segment. Residues 353–363 (VFVFSPEGAME) lie on the Extracellular side of the membrane. The helical transmembrane segment at 364–387 (IQLFFELALGSFQGLVVAVLYCFL) threads the bilayer. The Cytoplasmic segment spans residues 388–445 (NGEVQLEVQKKWQQWHLWEPPLCPVALSSSFSNGTSSLNSTKACPSGRSRDTCKVSII).

It belongs to the G-protein coupled receptor 2 family. Post-translationally, phosphorylated on Ser and Thr residues at the cytoplasmic C-terminus by G protein-coupled receptor kinases (GRKs).

It localises to the cell membrane. Its subcellular location is the basolateral cell membrane. G protein-coupled receptor activated by secretin (SCT), which is involved in different processes such as regulation of the pH of the duodenal content, food intake and water homeostasis. Ligand binding causes a conformation change that triggers signaling via guanine nucleotide-binding proteins (G proteins) and activates cAMP-dependent pathway. Upon binding to secretin, regulates the pH of the duodenum by (1) inhibiting the secretion of gastric acid from the parietal cells of the stomach and (2) stimulating the production of bicarbonate (NaHCO(3)) from the ductal cells of the pancreas. In addition to regulating the pH of the duodenal content, plays a central role in diet induced thermogenesis: acts as a non-sympathetic brown fat (BAT) activator mediating prandial thermogenesis, which consequentially induces satiation. Mechanistically, secretin released by the gut after a meal binds to secretin receptor (SCTR) in brown adipocytes, activating brown fat thermogenesis by stimulating lipolysis, which is sensed in the brain and promotes satiation. Also able to stimulate lipolysis in white adipocytes. Also plays an important role in cellular osmoregulation by regulating renal water reabsorption. Also plays a role in the central nervous system: required for synaptic plasticity. This Oryctolagus cuniculus (Rabbit) protein is Secretin receptor (SCTR).